Consider the following 116-residue polypeptide: Large ribosomal subunit protein bL17 (116 aa).

It belongs to the bacterial ribosomal protein bL17 family. In terms of assembly, part of the 50S ribosomal subunit. Contacts protein L32.

In Prochlorococcus marinus (strain MIT 9211), this protein is Large ribosomal subunit protein bL17.